The chain runs to 474 residues: tRNA-2-methylthio-N(6)-dimethylallyladenosine synthase (474 aa).

The 118-residue stretch at 3–120 (KKLHIKTWGC…LPEMINSVRG (118 aa)) folds into the MTTase N-terminal domain. [4Fe-4S] cluster contacts are provided by cysteine 12, cysteine 49, cysteine 83, cysteine 157, cysteine 161, and cysteine 164. Residues 143 to 375 (RAEGPTAFVS…QERINQQAMA (233 aa)) form the Radical SAM core domain. Positions 378 to 441 (RRMLGTTQRI…PNSLRGKVVR (64 aa)) constitute a TRAM domain.

It belongs to the methylthiotransferase family. MiaB subfamily. As to quaternary structure, monomer. Requires [4Fe-4S] cluster as cofactor.

It localises to the cytoplasm. The catalysed reaction is N(6)-dimethylallyladenosine(37) in tRNA + (sulfur carrier)-SH + AH2 + 2 S-adenosyl-L-methionine = 2-methylsulfanyl-N(6)-dimethylallyladenosine(37) in tRNA + (sulfur carrier)-H + 5'-deoxyadenosine + L-methionine + A + S-adenosyl-L-homocysteine + 2 H(+). It catalyses the reaction N(6)-dimethylallyladenosine(37) in tRNA + (sulfur carrier)-SH + AH2 + S-adenosyl-L-methionine = 2-thio-N(6)-dimethylallyladenosine(37) in tRNA + (sulfur carrier)-H + 5'-deoxyadenosine + L-methionine + A + H(+). The enzyme catalyses 2-thio-N(6)-dimethylallyladenosine(37) in tRNA + S-adenosyl-L-methionine = 2-methylsulfanyl-N(6)-dimethylallyladenosine(37) in tRNA + S-adenosyl-L-homocysteine + H(+). Functionally, catalyzes the methylthiolation of N6-(dimethylallyl)adenosine (i(6)A), leading to the formation of 2-methylthio-N6-(dimethylallyl)adenosine (ms(2)i(6)A) at position 37 in tRNAs that read codons beginning with uridine. The protein is tRNA-2-methylthio-N(6)-dimethylallyladenosine synthase of Salmonella typhimurium (strain LT2 / SGSC1412 / ATCC 700720).